The following is a 419-amino-acid chain: Putative trans-acting enoyl reductase MT2525 (419 aa).

Lysine 127 is covalently cross-linked (Isoglutamyl lysine isopeptide (Lys-Gln) (interchain with Q-Cter in protein Pup)). Positions 197-232 (NDPDARRQLSDPYMLSPDRGAEPELGPQPDLPSRRG) are disordered. A helical membrane pass occupies residues 284–304 (VLAPVVSVVGGGVGNAMFGLA).

Belongs to the saccharopine dehydrogenase family. Enoyl reductase subfamily.

It is found in the cell membrane. The chain is Putative trans-acting enoyl reductase MT2525 from Mycobacterium tuberculosis (strain CDC 1551 / Oshkosh).